The following is a 382-amino-acid chain: Lipid-A-disaccharide synthase (382 aa).

It belongs to the LpxB family.

It catalyses the reaction a lipid X + a UDP-2-N,3-O-bis[(3R)-3-hydroxyacyl]-alpha-D-glucosamine = a lipid A disaccharide + UDP + H(+). It functions in the pathway bacterial outer membrane biogenesis; LPS lipid A biosynthesis. In terms of biological role, condensation of UDP-2,3-diacylglucosamine and 2,3-diacylglucosamine-1-phosphate to form lipid A disaccharide, a precursor of lipid A, a phosphorylated glycolipid that anchors the lipopolysaccharide to the outer membrane of the cell. The chain is Lipid-A-disaccharide synthase from Koribacter versatilis (strain Ellin345).